We begin with the raw amino-acid sequence, 66 residues long: Large ribosomal subunit protein bL35 (66 aa).

It belongs to the bacterial ribosomal protein bL35 family.

The sequence is that of Large ribosomal subunit protein bL35 from Synechococcus sp. (strain JA-2-3B'a(2-13)) (Cyanobacteria bacterium Yellowstone B-Prime).